The primary structure comprises 1212 residues: uncharacterized protein (1212 aa).

The segment at 783-802 is disordered; the sequence is TRQDASGGSSSGTKKGEKLQ.

This is an uncharacterized protein from Human herpesvirus 6B (strain Z29) (HHV-6 variant B).